Here is a 429-residue protein sequence, read N- to C-terminus: Enolase 2 (429 aa).

Q163 contributes to the (2R)-2-phosphoglycerate binding site. E205 (proton donor) is an active-site residue. The Mg(2+) site is built by D242, E286, and D313. (2R)-2-phosphoglycerate is bound by residues K338, R367, S368, and K389. Catalysis depends on K338, which acts as the Proton acceptor.

It belongs to the enolase family. The cofactor is Mg(2+).

The protein localises to the cytoplasm. It localises to the secreted. The protein resides in the cell surface. The catalysed reaction is (2R)-2-phosphoglycerate = phosphoenolpyruvate + H2O. It functions in the pathway carbohydrate degradation; glycolysis; pyruvate from D-glyceraldehyde 3-phosphate: step 4/5. Catalyzes the reversible conversion of 2-phosphoglycerate (2-PG) into phosphoenolpyruvate (PEP). It is essential for the degradation of carbohydrates via glycolysis. The chain is Enolase 2 from Lactiplantibacillus plantarum (strain ATCC BAA-793 / NCIMB 8826 / WCFS1) (Lactobacillus plantarum).